We begin with the raw amino-acid sequence, 714 residues long: DNA gyrase subunit B (714 aa).

The Toprim domain maps to serine 492 to proline 606. Mg(2+) is bound by residues glutamate 498, aspartate 571, and aspartate 573.

This sequence belongs to the type II topoisomerase GyrB family. As to quaternary structure, heterotetramer, composed of two GyrA and two GyrB chains. In the heterotetramer, GyrA contains the active site tyrosine that forms a transient covalent intermediate with DNA, while GyrB binds cofactors and catalyzes ATP hydrolysis. Mg(2+) serves as cofactor. The cofactor is Mn(2+). It depends on Ca(2+) as a cofactor.

The protein resides in the cytoplasm. It carries out the reaction ATP-dependent breakage, passage and rejoining of double-stranded DNA.. DNA supercoiling is inhibited by EDTA, novobiocin, coumermycin and ciprofloxacin. Functionally, a type II topoisomerase that negatively supercoils closed circular double-stranded DNA in an ATP-dependent manner and also catalyzes the interconversion of other topological isomers of double-stranded DNA rings, including catenanes and knotted rings. Relaxes negatively supercoiled DNA in an ATP-independent manner. A linear reaction intermediate can be trapped in the presence of the antibiotic ciprofloxacin. Negative supercoiling favors strand separation, and DNA replication, transcription, recombination and repair, all of which involve strand separation. Type II topoisomerases break and join 2 DNA strands simultaneously in an ATP-dependent manner. This is DNA gyrase subunit B from Mycobacterium bovis (strain BCG / Pasteur 1173P2).